Reading from the N-terminus, the 265-residue chain is Speedy protein E12 (265 aa).

The disordered stretch occupies residues 1-80 (MGQILGKIMM…EPEKELAPEP (80 aa)). Residues 13–23 (QPQPQEEQSPQ) are compositionally biased toward low complexity. A compositionally biased stretch (acidic residues) spans 66 to 80 (DESDDEPEKELAPEP).

This sequence belongs to the Speedy/Ringo family.

The chain is Speedy protein E12 from Homo sapiens (Human).